The primary structure comprises 115 residues: MNPLIQSLTEGQLRTDIPSFRPGDTVRVHAKVVEGSRERIQIFEGVVISRKSQGISEMYTVRKISSGIGVERTFPIHTPRVEKIEVVRHGKVRRAKLYYLRALQGKAARIKEIRR.

Belongs to the bacterial ribosomal protein bL19 family.

Functionally, this protein is located at the 30S-50S ribosomal subunit interface and may play a role in the structure and function of the aminoacyl-tRNA binding site. In Streptococcus equi subsp. equi (strain 4047), this protein is Large ribosomal subunit protein bL19.